We begin with the raw amino-acid sequence, 577 residues long: Solute carrier family 22 member 16 (577 aa).

The helical transmembrane segment at 23 to 43 (LYFICAFQNISCGIHYLASVF) threads the bilayer. Asn57, Asn65, Asn68, and Asn108 each carry an N-linked (GlcNAc...) asparagine glycan. A run of 5 helical transmembrane segments spans residues 152 to 172 (WLAM…SVTF), 183 to 203 (VVLW…AFAV), 214 to 234 (FLAM…MEFI), 244 to 264 (VHLH…GYLV), and 268 to 288 (WLYQ…CWVL). Asn345 and Asn352 each carry an N-linked (GlcNAc...) asparagine glycan. Helical transmembrane passes span 359-379 (TLTV…FSLN), 389-409 (LNLF…CIAM), 416-436 (TVLA…MVIP), 441-461 (ILGV…FGLI), 476-496 (LAVG…PFSV), and 501-521 (IWIF…GVLT). The tract at residues 543–577 (ESENESKSSKLLLTTNNSGLEKTEAITPRDSGLGE) is disordered. Asn546 and Asn558 each carry an N-linked (GlcNAc...) asparagine glycan. Residues 551 to 560 (SKLLLTTNNS) show a composition bias toward low complexity.

This sequence belongs to the major facilitator (TC 2.A.1) superfamily. Organic cation transporter (TC 2.A.1.19) family. As to expression, expressed in testis and epididymis (at protein level). Expressed in endometrium (at protein level); highly expressed during the normal secretory phase, but expression is significantly reduced in the proliferative phase. Expressed at lower levels in adult tissues including bone marrow (at protein level). Expressed in hematopoietic cells, including CD34(+) leukocytes. Expressed in fetal liver (at protein level), brain, lung, kidney, heart, skeletal muscle, spleen and thymus. Expressed in leukemia cells. Abundantly expressed in ovarian cancer clear-cell adenocarcinoma.

Its subcellular location is the cell membrane. The catalysed reaction is (R)-carnitine(in) = (R)-carnitine(out). It catalyses the reaction spermidine(in) = spermidine(out). Facilitative organic cation transporter that mediates the transport of carnitine as well as the polyamine spermidine. Mediates the partially Na(+)-dependent bidirectional transport of carnitine. May mediate L-carnitine secretion from testis epididymal epithelium into the lumen which is involved in the maturation of spermatozoa. The chain is Solute carrier family 22 member 16 from Homo sapiens (Human).